The following is a 241-amino-acid chain: MAPK phosphothreonine lyase (241 aa).

Residue histidine 106 is the Proton donor of the active site. Lysine 136 (proton acceptor) is an active-site residue.

This sequence belongs to the phosphothreonine lyase family.

The protein localises to the secreted. Functionally, secreted effector that irreversibly inactivates host MAP kinases by catalyzing the dephosphorylation of the phosphothreonine residue in the pT-X-pY motif present in MAPKs, via a beta-elimination reaction leading to a dehydrobutyrine residue. This chain is MAPK phosphothreonine lyase (spvC), found in Salmonella enteritidis.